Here is a 313-residue protein sequence, read N- to C-terminus: Aspartoacylase (313 aa).

Positions 21 and 24 each coordinate Zn(2+). Residues Arg63, Asn70, and Arg71 each contribute to the N-acetyl-L-aspartate site. Residue His116 coordinates Zn(2+). Positions 164 and 168 each coordinate N-acetyl-L-aspartate. Glu178 acts as the Proton donor/acceptor in catalysis. Position 288 (Tyr288) interacts with N-acetyl-L-aspartate.

It belongs to the AspA/AstE family. Aspartoacylase subfamily. In terms of assembly, homodimer. It depends on Zn(2+) as a cofactor.

The protein resides in the cytoplasm. It is found in the nucleus. The catalysed reaction is an N-acyl-L-aspartate + H2O = a carboxylate + L-aspartate. It catalyses the reaction N-acetyl-L-aspartate + H2O = L-aspartate + acetate. In terms of biological role, catalyzes the deacetylation of N-acetylaspartic acid (NAA) to produce acetate and L-aspartate. NAA occurs in high concentration in brain and its hydrolysis NAA plays a significant part in the maintenance of intact white matter. In other tissues it acts as a scavenger of NAA from body fluids. This Bos taurus (Bovine) protein is Aspartoacylase (ASPA).